Here is a 908-residue protein sequence, read N- to C-terminus: MGSNRPKNFRRRGDDGGDEIDGKVATPSSKPTSTLSSSKPKTLSASAPKKKLLSFADDEEEEEDGAPRVTIKPKNGRDRVKSSSRLGVSGSSHRHSSTKERRPASSNVLPQAGSYSKEALLELQKNTRTLPYSRSSANAEPKVVLKGLIKPPQDHEQQSLKDVVKQVSDLDFDEEGEEEQHEDAFADQAAIIRAKKERMRQSRSAPAPDYISLDGGIVNHSAVEGVSDEDADFQGIFVGPRPQKDDKKGVFDFGDENPTAKETTTSSIYEDEDEEDKLWEEEQFKKGIGKRMDEGSHRTVTSNGIGVPLHSKQQTLPQQQPQMYAYHAGTPMPNVSVAPTIGPATSVDTLPMSQQAELAKKALKDNVKKLKESHAKTLSSLTKTDENLTASLMSITALESSLSAAGDKYVFMQKLRDFISVICDFMQNKGSLIEEIEDQMKELNEKHALSILERRIADNNDEMIELGAAVKAAMTVLNKHGSSSSVIAAATGAALAASTSIRQQMNQPVKLDEFGRDENLQKRREVEQRAAARQKRRARFENKRASAMEVDGPSLKIEGESSTDESDTETSAYKETRDSLLQCADKVFSDASEEYSQLSKVKARFERWKRDYSSTYRDAYMSLTVPSIFSPYVRLELLKWDPLHQDVDFFDMKWHGLLFDYGKPEDGDDFAPDDTDANLVPELVEKVAIPILHHQIVRCWDILSTRETRNAVAATSLVTNYVSASSEALAELFAAIRARLVEAIAAISVPTWDPLVLKAVPNTPQVAAYRFGTSVRLMRNICMWKDILALPVLENLALSDLLFGKVLPHVRSIASNIHDAVTRTERIVASLSGVWTGPSVTRTHSRPLQPLVDCTLTLRRILEKRLGSGLDDAETTGLARRLKRILVELHEHDHAREIVRTFNLKEAV.

Disordered stretches follow at residues 1 to 113 (MGSN…PQAG) and 238 to 277 (VGPR…EEDK). Residues 25 to 47 (ATPSSKPTSTLSSSKPKTLSASA) show a composition bias toward low complexity. A coiled-coil region spans residues 426–453 (MQNKGSLIEEIEDQMKELNEKHALSILE). Basic and acidic residues predominate over residues 513 to 530 (EFGRDENLQKRREVEQRA). The segment at 513-574 (EFGRDENLQK…ESDTETSAYK (62 aa)) is disordered.

The protein belongs to the GCF family. In terms of assembly, interacts with STIPL1/NTR1.

It localises to the nucleus. Functionally, transcriptional repressor regulating endoreduplication through control of A-type cyclins expression. Does not bind to promoter sequences (in vitro) and may act by interacting with tissue-specific transcription factors. Enhances the endocycle in endoreduplicating cells in seedlings. Required for efficient splicing. The chain is Transcriptional repressor ILP1 from Arabidopsis thaliana (Mouse-ear cress).